The chain runs to 1231 residues: S-layer protein A (1231 aa).

The signal sequence occupies residues 1-35 (MNKTLGLILTSVFLLSTLGIITGFVIPTQAANSND).

The protein belongs to the Sulfolobales SlaA family. As to quaternary structure, the mushroom-shaped unit cells of the Sulfolobales' S-layers may consist of three SlaB subunits and six SlaA subunits.

The protein resides in the secreted. The protein localises to the cell wall. It localises to the S-layer. Its function is as follows. S-layer large protein. May form the highly ordered outer sheath. This is S-layer protein A from Saccharolobus solfataricus (strain ATCC 35092 / DSM 1617 / JCM 11322 / P2) (Sulfolobus solfataricus).